The following is a 193-amino-acid chain: Putative manganese efflux pump MntP (193 aa).

Transmembrane regions (helical) follow at residues 6-26 (VIFIALGLSADCFAVSIGIAC), 48-68 (AGMVVIGFFAGLSVIDIISAF), 71-91 (WIAFGLLLFIGVRMIYEALQG), 108-128 (LLGVAVATSIDALAVGLAFAV), 132-152 (NIGLAALLIGLVSLTVSFLGF), and 165-185 (WVGVAGGLVLVFIGLKILAEH).

This sequence belongs to the MntP (TC 9.B.29) family.

Its subcellular location is the cell membrane. Probably functions as a manganese efflux pump. This chain is Putative manganese efflux pump MntP, found in Dehalococcoides mccartyi (strain ATCC BAA-2100 / JCM 16839 / KCTC 5957 / BAV1).